Reading from the N-terminus, the 190-residue chain is Xanthine phosphoribosyltransferase (190 aa).

Positions 20 and 27 each coordinate xanthine. 129–133 is a 5-phospho-alpha-D-ribose 1-diphosphate binding site; that stretch reads ANGRA. Lysine 157 serves as a coordination point for xanthine.

The protein belongs to the purine/pyrimidine phosphoribosyltransferase family. Xpt subfamily. As to quaternary structure, homodimer.

It is found in the cytoplasm. The catalysed reaction is XMP + diphosphate = xanthine + 5-phospho-alpha-D-ribose 1-diphosphate. It participates in purine metabolism; XMP biosynthesis via salvage pathway; XMP from xanthine: step 1/1. In terms of biological role, converts the preformed base xanthine, a product of nucleic acid breakdown, to xanthosine 5'-monophosphate (XMP), so it can be reused for RNA or DNA synthesis. This is Xanthine phosphoribosyltransferase from Clostridioides difficile (strain 630) (Peptoclostridium difficile).